Here is a 499-residue protein sequence, read N- to C-terminus: MTDNLDKNYIIALDQGTTSSRAIIFDRDANVVGTSQREFAQHYPQAGWVEHDPMEIFATQSATMVEALAQAGISHAQVAAIGITNQRETTVVWDKETGRPVYNAIVWQCRRSTEICAQLKRDGHEQYIREATGLVTDPYFSGTKLKWILDNVEGARERAERGELLFGTIDTWLIWKFSGGKVHVTDYTNASRTLMFNIHTLHWDEKLLDILGIPRQMLPEVRPSSEVYGKTKSGIDIAGIAGDQQSALFGQMCVEPGQAKNTYGTGCFLLMNTGDKAVKSSHGLLTTIACGPRGEVAYALEGAVFNGGSTVQWLRDELKIVNDAHDTEYFASKVKDSNGVYLVPAFTGLGAPYWDPYARGALFGLTRGVKVDHIIRAALESIAYQTRDVLDAMQQDCGERLSELRVDGGAVANNFLMQFQADILGTCVERPKMRETTALGAAYLAGLACGFWSGLDELRDKAIIEREFSPQLAEAEKEKLYKGWRKAVDRTRDWEDHDA.

Thr-17 lines the ADP pocket. Residues Thr-17, Thr-18, and Ser-19 each coordinate ATP. Residue Thr-17 participates in sn-glycerol 3-phosphate binding. Arg-21 provides a ligand contact to ADP. Sn-glycerol 3-phosphate-binding residues include Arg-87, Glu-88, Tyr-139, and Asp-243. Positions 87, 88, 139, 243, and 244 each coordinate glycerol. ADP is bound by residues Thr-265 and Gly-308. The ATP site is built by Thr-265, Gly-308, Gln-312, and Gly-409. ADP contacts are provided by Gly-409 and Asn-413.

The protein belongs to the FGGY kinase family.

The catalysed reaction is glycerol + ATP = sn-glycerol 3-phosphate + ADP + H(+). It functions in the pathway polyol metabolism; glycerol degradation via glycerol kinase pathway; sn-glycerol 3-phosphate from glycerol: step 1/1. Inhibited by fructose 1,6-bisphosphate (FBP). Its function is as follows. Key enzyme in the regulation of glycerol uptake and metabolism. Catalyzes the phosphorylation of glycerol to yield sn-glycerol 3-phosphate. This is Glycerol kinase from Pseudomonas entomophila (strain L48).